The sequence spans 137 residues: Insulin-like peptide 2 (137 aa).

The first 26 residues, 1–26, serve as a signal peptide directing secretion; the sequence is MSKPLSFISMVAVILLASSTVKLAQG. Intrachain disulfides connect cysteine 29/cysteine 119, cysteine 41/cysteine 132, and cysteine 118/cysteine 123. Residues 53 to 104 constitute a propeptide, connecting peptide; sequence AMPGADSDLDALNPLQFVQEFEEEDNSISEPLRSALFPGSYLGGVLNSLAEV.

It belongs to the insulin family. In terms of assembly, heterodimer of a B chain and an A chain linked by two disulfide bonds. In terms of tissue distribution, broadly expressed at a low level in the embryonic mesoderm, beginning at stage 12. Expressed at a high level in the embryonic anterior midgut, with expression diminishing at late stage 16. Expressed at a low level in larval imaginal disks. Expressed at a high level in larval salivary glands and in seven cells of each larval brain hemisphere that may correspond to neurosecretory cells.

The protein resides in the secreted. Functionally, possible ligand of InR/insulin-like receptor. In terms of biological role, plays a role in regulating body size by increasing cell size and cell number of individual organs. Probably mediates its growth effects by acting as a ligand for the insulin receptor and transducing a signal via the Chico/PI3K/Akt(PKB) pathway. This Drosophila melanogaster (Fruit fly) protein is Insulin-like peptide 2.